The primary structure comprises 56 residues: Large ribosomal subunit protein bL32 (56 aa).

The segment covering M1 to R16 has biased composition (basic residues). The tract at residues M1–L36 is disordered. The span at S21–G34 shows a compositional bias: polar residues.

Belongs to the bacterial ribosomal protein bL32 family.

The sequence is that of Large ribosomal subunit protein bL32 from Shewanella sediminis (strain HAW-EB3).